Consider the following 392-residue polypeptide: HCLS1-binding protein 3 (392 aa).

N-acetylmethionine is present on Met1. Ser3, Ser139, and Ser194 each carry phosphoserine. Residues 19–142 (GLDLTVPQHQ…EFLGTRSPGA (124 aa)) enclose the PX domain. Disordered stretches follow at residues 138 to 162 (RSPG…QTGN), 174 to 265 (DQVA…PLKL), and 319 to 364 (GAEP…KPQE). Acidic residues predominate over residues 190–201 (DAEESLEEEEAL). Basic residues predominate over residues 208 to 220 (RSKKPKKHPKVAV). Residue Ser249 is modified to Phosphoserine. A compositionally biased stretch (pro residues) spans 325 to 335 (KPQLKPKPPVA). Lys337 carries the N6-acetyllysine modification.

As to quaternary structure, binds HCLS1. Interacts with the SH3 domain of HCLS1 in vitro.

Functionally, may be a modulator of IL-2 signaling. The polypeptide is HCLS1-binding protein 3 (HS1BP3) (Homo sapiens (Human)).